Consider the following 562-residue polypeptide: NAD-dependent malic enzyme (562 aa).

Residue Tyr-101 is the Proton donor of the active site. Arg-154 contributes to the NAD(+) binding site. Lys-172 functions as the Proton acceptor in the catalytic mechanism. Residues Glu-243, Asp-244, and Asp-267 each coordinate a divalent metal cation. NAD(+) is bound by residues Asp-267 and Asn-415.

The protein belongs to the malic enzymes family. Homotetramer. Mg(2+) serves as cofactor. Requires Mn(2+) as cofactor.

It carries out the reaction (S)-malate + NAD(+) = pyruvate + CO2 + NADH. It catalyses the reaction oxaloacetate + H(+) = pyruvate + CO2. This is NAD-dependent malic enzyme from Shewanella halifaxensis (strain HAW-EB4).